The chain runs to 281 residues: ATP synthase gamma chain (281 aa).

Belongs to the ATPase gamma chain family. In terms of assembly, F-type ATPases have 2 components, CF(1) - the catalytic core - and CF(0) - the membrane proton channel. CF(1) has five subunits: alpha(3), beta(3), gamma(1), delta(1), epsilon(1). CF(0) has three main subunits: a, b and c.

It is found in the cell membrane. Functionally, produces ATP from ADP in the presence of a proton gradient across the membrane. The gamma chain is believed to be important in regulating ATPase activity and the flow of protons through the CF(0) complex. In Mesoplasma florum (strain ATCC 33453 / NBRC 100688 / NCTC 11704 / L1) (Acholeplasma florum), this protein is ATP synthase gamma chain.